Reading from the N-terminus, the 112-residue chain is 2Fe-2S ferredoxin (112 aa).

Residues 1-104 (MPQIVILPHA…DLVVEIPKYT (104 aa)) enclose the 2Fe-2S ferredoxin-type domain. Residues cysteine 42, cysteine 48, cysteine 51, and cysteine 87 each coordinate [2Fe-2S] cluster.

The protein belongs to the adrenodoxin/putidaredoxin family. [2Fe-2S] cluster is required as a cofactor.

In terms of biological role, ferredoxin are iron-sulfur proteins that transfer electrons in a wide variety of metabolic reactions. This chain is 2Fe-2S ferredoxin (fdx), found in Pseudomonas aeruginosa (strain ATCC 15692 / DSM 22644 / CIP 104116 / JCM 14847 / LMG 12228 / 1C / PRS 101 / PAO1).